The following is a 150-amino-acid chain: UPF0735 ACT domain-containing protein DSY2247 (150 aa).

Residues 74–149 (TFSLTLENTA…GVRKIEVIGQ (76 aa)) enclose the ACT domain.

This sequence belongs to the UPF0735 family.

In Desulfitobacterium hafniense (strain Y51), this protein is UPF0735 ACT domain-containing protein DSY2247.